A 70-amino-acid chain; its full sequence is Large ribosomal subunit protein uL29 (70 aa).

The protein belongs to the universal ribosomal protein uL29 family.

The polypeptide is Large ribosomal subunit protein uL29 (Thermosynechococcus vestitus (strain NIES-2133 / IAM M-273 / BP-1)).